A 185-amino-acid chain; its full sequence is Ribosome-recycling factor (185 aa).

The protein belongs to the RRF family.

The protein resides in the cytoplasm. Its function is as follows. Responsible for the release of ribosomes from messenger RNA at the termination of protein biosynthesis. May increase the efficiency of translation by recycling ribosomes from one round of translation to another. In Macrococcus caseolyticus (strain JCSC5402) (Macrococcoides caseolyticum), this protein is Ribosome-recycling factor.